A 253-amino-acid polypeptide reads, in one-letter code: tRNA (guanine-N(1)-)-methyltransferase (253 aa).

Residues Gly110 and Ile130–Leu135 each bind S-adenosyl-L-methionine.

The protein belongs to the RNA methyltransferase TrmD family. Homodimer.

It is found in the cytoplasm. The enzyme catalyses guanosine(37) in tRNA + S-adenosyl-L-methionine = N(1)-methylguanosine(37) in tRNA + S-adenosyl-L-homocysteine + H(+). Functionally, specifically methylates guanosine-37 in various tRNAs. This is tRNA (guanine-N(1)-)-methyltransferase from Carboxydothermus hydrogenoformans (strain ATCC BAA-161 / DSM 6008 / Z-2901).